Reading from the N-terminus, the 314-residue chain is Phospho-N-acetylmuramoyl-pentapeptide-transferase (314 aa).

10 helical membrane passes run 4 to 24 (LIFYITLITFIFLLFLYPIFI), 52 to 72 (TMGGILFILAIFFLSLLTYFI), 77 to 97 (LFLIIGVASLLFGFIGFLDDY), 111 to 131 (IQKLLLQFLFSIVIVYLISIF), 146 to 166 (LDLKFFYPLWGIIYLTGMSNA), 169 to 189 (LTDGIDGLSGGIYVISALFTA), 191 to 211 (IAGINFNHIPLLILPVIAYLF), 219 to 239 (IFMGDTGSLALGGILGSLALY), 242 to 262 (VELFTILTCFIFISEMFSVII), and 294 to 314 (IVLIFWTINILTGIVALGGVL).

This sequence belongs to the glycosyltransferase 4 family. MraY subfamily. Mg(2+) serves as cofactor.

It is found in the cell inner membrane. The enzyme catalyses UDP-N-acetyl-alpha-D-muramoyl-L-alanyl-gamma-D-glutamyl-meso-2,6-diaminopimeloyl-D-alanyl-D-alanine + di-trans,octa-cis-undecaprenyl phosphate = di-trans,octa-cis-undecaprenyl diphospho-N-acetyl-alpha-D-muramoyl-L-alanyl-D-glutamyl-meso-2,6-diaminopimeloyl-D-alanyl-D-alanine + UMP. It participates in cell wall biogenesis; peptidoglycan biosynthesis. Functionally, catalyzes the initial step of the lipid cycle reactions in the biosynthesis of the cell wall peptidoglycan: transfers peptidoglycan precursor phospho-MurNAc-pentapeptide from UDP-MurNAc-pentapeptide onto the lipid carrier undecaprenyl phosphate, yielding undecaprenyl-pyrophosphoryl-MurNAc-pentapeptide, known as lipid I. This chain is Phospho-N-acetylmuramoyl-pentapeptide-transferase, found in Petrotoga mobilis (strain DSM 10674 / SJ95).